The primary structure comprises 637 residues: Chaperone protein DnaK (637 aa).

Residue T203 is modified to Phosphothreonine; by autocatalysis. The disordered stretch occupies residues S600–V637. Residues G604 to E616 show a composition bias toward low complexity. The segment covering A619–V637 has biased composition (basic and acidic residues).

Belongs to the heat shock protein 70 family.

In terms of biological role, acts as a chaperone. In Dehalococcoides mccartyi (strain ATCC BAA-2266 / KCTC 15142 / 195) (Dehalococcoides ethenogenes (strain 195)), this protein is Chaperone protein DnaK.